The following is a 254-amino-acid chain: Acetylglutamate kinase (254 aa).

Substrate is bound by residues 40 to 41, R62, and N154; that span reads GG.

The protein belongs to the acetylglutamate kinase family. ArgB subfamily.

Its subcellular location is the cytoplasm. The enzyme catalyses N-acetyl-L-glutamate + ATP = N-acetyl-L-glutamyl 5-phosphate + ADP. The protein operates within amino-acid biosynthesis; L-arginine biosynthesis; N(2)-acetyl-L-ornithine from L-glutamate: step 2/4. Catalyzes the ATP-dependent phosphorylation of N-acetyl-L-glutamate. The sequence is that of Acetylglutamate kinase from Staphylococcus aureus (strain Mu3 / ATCC 700698).